The chain runs to 190 residues: Major sperm protein 32 (190 aa).

Residues 72–189 (MIQTQPGTKI…RRKNLPIEYN (118 aa)) enclose the MSP domain.

Sperm.

The protein localises to the cell projection. Its subcellular location is the pseudopodium. It is found in the cytoplasm. The protein resides in the cytoskeleton. Central component in molecular interactions underlying sperm crawling. Forms an extensive filament system that extends from sperm villipoda, along the leading edge of the pseudopod. This Caenorhabditis elegans protein is Major sperm protein 32 (msp-32).